A 290-amino-acid chain; its full sequence is Transmembrane protein 33 homolog (290 aa).

2 disordered regions span residues 1 to 22 and 39 to 72; these read MSSP…EFTG and IDPN…SPRA. Positions 45–72 are enriched in low complexity; the sequence is SSNNTTTQRPSTSSSSRTSSSSTSSPRA. A run of 4 helical transmembrane segments spans residues 83 to 103, 109 to 129, 150 to 170, and 218 to 238; these read LYGA…FYFI, FFYK…FNTF, FVFY…YLLP, and IVLI…LVFI.

This sequence belongs to the PER33/POM33 family.

It localises to the membrane. The sequence is that of Transmembrane protein 33 homolog (tmem33) from Dictyostelium discoideum (Social amoeba).